Reading from the N-terminus, the 130-residue chain is MDTMDTMGRHVIAELWDCDFDKLNDMPYIEQLFVDAALRAGAEVREVAFHKFAPQGVSGVVIISESHLTIHSFPEHGYASIDVYTCGDRIDPNVAAEYIAEGLNAKTRESIELPRGTGSFEIKQRETKAL.

Ser-66 (schiff-base intermediate with substrate; via pyruvic acid) is an active-site residue. Ser-66 bears the Pyruvic acid (Ser); by autocatalysis mark. His-71 serves as the catalytic Proton acceptor; for processing activity. Residue Cys-86 is the Proton donor; for catalytic activity of the active site.

It belongs to the prokaryotic AdoMetDC family. Type 1 subfamily. As to quaternary structure, heterotetramer of two alpha and two beta chains arranged as a dimer of alpha/beta heterodimers. Pyruvate is required as a cofactor. In terms of processing, is synthesized initially as an inactive proenzyme. Formation of the active enzyme involves a self-maturation process in which the active site pyruvoyl group is generated from an internal serine residue via an autocatalytic post-translational modification. Two non-identical subunits are generated from the proenzyme in this reaction, and the pyruvate is formed at the N-terminus of the alpha chain, which is derived from the carboxyl end of the proenzyme. The post-translation cleavage follows an unusual pathway, termed non-hydrolytic serinolysis, in which the side chain hydroxyl group of the serine supplies its oxygen atom to form the C-terminus of the beta chain, while the remainder of the serine residue undergoes an oxidative deamination to produce ammonia and the pyruvoyl group blocking the N-terminus of the alpha chain.

It catalyses the reaction S-adenosyl-L-methionine + H(+) = S-adenosyl 3-(methylsulfanyl)propylamine + CO2. The protein operates within amine and polyamine biosynthesis; S-adenosylmethioninamine biosynthesis; S-adenosylmethioninamine from S-adenosyl-L-methionine: step 1/1. Its function is as follows. Catalyzes the decarboxylation of S-adenosylmethionine to S-adenosylmethioninamine (dcAdoMet), the propylamine donor required for the synthesis of the polyamines spermine and spermidine from the diamine putrescine. This Bacillus cereus (strain ATCC 10987 / NRS 248) protein is S-adenosylmethionine decarboxylase proenzyme.